A 363-amino-acid polypeptide reads, in one-letter code: Biotin synthase (363 aa).

3 positions are modified to phosphoserine: S13, S14, and S17. Residues K54–K276 enclose the Radical SAM core domain. Residues C69, C73, and C76 each contribute to the [4Fe-4S] cluster site. The [2Fe-2S] cluster site is built by C113, C146, C206, and R280. The segment at E337–L363 is disordered.

The protein belongs to the radical SAM superfamily. Biotin synthase family. [4Fe-4S] cluster is required as a cofactor. [2Fe-2S] cluster serves as cofactor.

It carries out the reaction (4R,5S)-dethiobiotin + (sulfur carrier)-SH + 2 reduced [2Fe-2S]-[ferredoxin] + 2 S-adenosyl-L-methionine = (sulfur carrier)-H + biotin + 2 5'-deoxyadenosine + 2 L-methionine + 2 oxidized [2Fe-2S]-[ferredoxin]. The protein operates within cofactor biosynthesis; biotin biosynthesis; biotin from 7,8-diaminononanoate: step 2/2. Functionally, catalyzes the last step of biotin biosynthesis, the conversion of dethiobiotin to biotin. In Schizosaccharomyces pombe (strain 972 / ATCC 24843) (Fission yeast), this protein is Biotin synthase (bio2).